The sequence spans 1085 residues: MLLKQIFLPFFVLFNAINAIDIYQNQVSRGTIDLSIGAITIHSGAYWSIIDNAISALVGTLTVQQDAGFYITGLNPLLGLQVELLGVLNSIKNDGIVSFNGLNSLVGPIYNLVGLSFQNNGEFYLSASGVAPPVFSITAADWHNNGLLVLAQAKRTSALANLGFPTGSIENQGSICLFGTAYQQLTSITGSGCISADRDSTIYIFSSLLPIATTQTLYLADRASSIVIQPVTLPATYTVRGFGNGNKVGISLPLLSVPLLGQPAYSYDPSSGVLTLRGLGVGLLSQRFQIGTGYDSSLLEIVTDDGAGLPTTLLGSVRYNGPVPNNAVPASCNCKYVPPSPGTDESSSLSSSTSEQSSSSATSVSASETSDTSSTQESSLSSEVSSTQEPSSSTPEPSSSSETSSTQESSSTEGPSSSTDSSTEASSSESSTAPSSSAEASSSTESSTEEPSSSTEGPSSSQESSSSEESSTQEPSSSTKESSSTEGPSSTEESSSTEGPSSSTDSSTDITSASSTDEQSSSGTGQSSTEDEPIDSTESDTSSATDSSTATDSSATNTDTNSESTDSSTATDTSSTDSNTASSTETNTDVTDSSTDSNTGATESSTATDTNTDATDSSTVSETGATDSSTATDTNTGATESSTDSNTGATDSSTATDTNTSATNTDTNTGSNTATNTDDNTATDTSSTETNTATNTDGTETNTGTTETNTDTSASNTDDNTGSNTATNTGGTDTNTDTNTGGTDTNTGTNTGGTDTKTGTNTATGTNTGATETNTATNTNGNGTNTNTGATDTATNTATGTNTNTGATDTNTNTNTGATVTNTATNTGDVSATKDIPSPTSTDEGSNNGGGSNNGSGSNNGSGNGSGSGSGSGNGSGDGSNNGSGNGSDNGSGSGNGSDNGSGSGSGSDNGSGSGSGSGSGSGNGSGSGSDNGSGSGNGSGSGSGSGSGSDNGSGSGSNNGSGNGSGNGSGSGSDNGSGNGSGSGSGSGSGNGSGNGSGSGSGSGSGNGSGSNNNNGSGSGSGSGNGQDNGIITSSIGQPGSSTSTQGPSSSNSATIPEQANSGNHIKFTLFNGLLIGLVPIVFM.

The N-terminal stretch at 1–19 (MLLKQIFLPFFVLFNAINA) is a signal peptide. Residues 339 to 1060 (PSPGTDESSS…SSNSATIPEQ (722 aa)) are disordered. Residues 342–528 (GTDESSSLSS…QSSSGTGQSS (187 aa)) are compositionally biased toward low complexity. Positions 529 to 538 (TEDEPIDSTE) are enriched in acidic residues. Residues 539 to 828 (SDTSSATDSS…TVTNTATNTG (290 aa)) are compositionally biased toward low complexity. Asn659, Asn782, Asn854, Asn860, Asn864, Asn874, Asn882, Asn886, Asn890, Asn896, Asn900, Asn910, Asn924, Asn932, Asn938, Asn952, Asn960, Asn964, Asn968, Asn976, Asn980, Asn992, Asn996, Asn1008, and Asn1016 each carry an N-linked (GlcNAc...) asparagine glycan. A compositionally biased stretch (gly residues) spans 847 to 1010 (NNGGGSNNGS…GSGSGSGNGS (164 aa)). Over residues 1018–1028 (SGSGSGSGNGQ) the composition is skewed to gly residues. Low complexity predominate over residues 1031 to 1052 (GIITSSIGQPGSSTSTQGPSSS). Residue Asn1062 is the site of GPI-anchor amidated asparagine attachment. A propeptide spans 1063–1085 (SGNHIKFTLFNGLLIGLVPIVFM) (removed in mature form).

The protein belongs to the HYR1/IFF family. The GPI-anchor is attached to the protein in the endoplasmic reticulum and serves to target the protein to the cell surface. There, the glucosamine-inositol phospholipid moiety is cleaved off and the GPI-modified mannoprotein is covalently attached via its lipidless GPI glycan remnant to the 1,6-beta-glucan of the outer cell wall layer.

It is found in the secreted. It localises to the cell wall. The protein localises to the membrane. Functionally, GPI-anchored cell wall protein involved in cell wall organization, hyphal growth, as well as in host-fungal interaction and virulence. The protein is Cell wall protein IFF6 (IFF6) of Candida albicans (strain SC5314 / ATCC MYA-2876) (Yeast).